Consider the following 576-residue polypeptide: Arginine--tRNA ligase (576 aa).

The 'HIGH' region motif lies at 126-136 (ANPTGPMHIGH).

This sequence belongs to the class-I aminoacyl-tRNA synthetase family. As to quaternary structure, monomer.

It localises to the cytoplasm. The enzyme catalyses tRNA(Arg) + L-arginine + ATP = L-arginyl-tRNA(Arg) + AMP + diphosphate. The chain is Arginine--tRNA ligase from Rickettsia bellii (strain OSU 85-389).